The sequence spans 200 residues: Superoxide dismutase [Fe] (200 aa).

4 residues coordinate Fe cation: histidine 28, histidine 80, aspartate 162, and histidine 166.

This sequence belongs to the iron/manganese superoxide dismutase family. In terms of assembly, homodimer. The cofactor is Fe cation.

The catalysed reaction is 2 superoxide + 2 H(+) = H2O2 + O2. Its function is as follows. Destroys superoxide anion radicals which are normally produced within the cells and which are toxic to biological systems. This is Superoxide dismutase [Fe] (sodB) from Nostoc sp. (strain PCC 7120 / SAG 25.82 / UTEX 2576).